Here is a 173-residue protein sequence, read N- to C-terminus: Probable xanthine dehydrogenase subunit E (173 aa).

The region spanning glutamate 14–leucine 90 is the 2Fe-2S ferredoxin-type domain. [2Fe-2S] cluster is bound by residues cysteine 52, cysteine 57, cysteine 60, cysteine 72, cysteine 110, cysteine 113, cysteine 145, and cysteine 147.

As to quaternary structure, could be composed of four subunits: PucA, PucC, PucD and PucE. It depends on [2Fe-2S] cluster as a cofactor.

It carries out the reaction xanthine + NAD(+) + H2O = urate + NADH + H(+). The enzyme catalyses hypoxanthine + NAD(+) + H2O = xanthine + NADH + H(+). It functions in the pathway purine metabolism; hypoxanthine degradation; urate from hypoxanthine: step 1/2. It participates in purine metabolism; hypoxanthine degradation; urate from hypoxanthine: step 2/2. Its function is as follows. Oxidizes hypoxanthine and xanthine to uric acid. The sequence is that of Probable xanthine dehydrogenase subunit E (pucE) from Bacillus subtilis (strain 168).